A 92-amino-acid chain; its full sequence is Muconolactone Delta-isomerase (92 aa).

It belongs to the muconolactone Delta-isomerase family. In terms of assembly, homodecamer.

It catalyses the reaction (S)-muconolactone = (4,5-dihydro-5-oxofuran-2-yl)-acetate. It participates in aromatic compound metabolism; beta-ketoadipate pathway; 5-oxo-4,5-dihydro-2-furylacetate from catechol: step 3/3. This Cupriavidus pinatubonensis (strain JMP 134 / LMG 1197) (Cupriavidus necator (strain JMP 134)) protein is Muconolactone Delta-isomerase (catC).